Here is a 457-residue protein sequence, read N- to C-terminus: Glycoprotein endo-alpha-1,2-mannosidase-like protein (457 aa).

Residues 1–8 (MARRRRRA) lie on the Cytoplasmic side of the membrane. Residues 9–29 (CIALFLVLLFAFGTLMGLRTL) form a helical; Signal-anchor for type II membrane protein membrane-spanning segment. At 30–457 (KAPDGLPALG…FIKEKEQWLM (428 aa)) the chain is on the lumenal side. A disordered region spans residues 46-93 (PFERRPEGAPAPAARAPAAPAAPPPPPPPPRTADPGGSPGPAPAEAEP). Residues 53 to 64 (GAPAPAARAPAA) are compositionally biased toward low complexity. A compositionally biased stretch (pro residues) spans 65–87 (PAAPPPPPPPPRTADPGGSPGPA).

It belongs to the glycosyl hydrolase 99 family.

It localises to the golgi apparatus membrane. The polypeptide is Glycoprotein endo-alpha-1,2-mannosidase-like protein (MANEAL) (Homo sapiens (Human)).